Consider the following 479-residue polypeptide: Putative L-cysteine desulfhydrase 2 (479 aa).

The segment at 1-36 (MASLQSGGDAAANGVDADVDGAASPPSAKRPRAGAG) is disordered. A compositionally biased stretch (low complexity) spans 7–36 (GGDAAANGVDADVDGAASPPSAKRPRAGAG). N6-(pyridoxal phosphate)lysine is present on K270.

It belongs to the class-V pyridoxal-phosphate-dependent aminotransferase family. Pyridoxal 5'-phosphate is required as a cofactor.

It catalyses the reaction L-cysteine + H2O = hydrogen sulfide + pyruvate + NH4(+) + H(+). Its function is as follows. Catalyzes the production of hydrogen sulfide (H2S) from cysteine. This is Putative L-cysteine desulfhydrase 2 from Oryza sativa subsp. japonica (Rice).